A 395-amino-acid polypeptide reads, in one-letter code: Tryptophan--tRNA ligase (395 aa).

Residues 8 to 10 and 16 to 17 contribute to the ATP site; these read RPT and GH. The 'HIGH' region signature appears at 9 to 17; that stretch reads PTGKLHLGH. The tract at residues 117 to 179 is insert; the sequence is RLTDLEKEFK…EIEPEILKRL (63 aa). Residue aspartate 204 participates in L-tryptophan binding. Residues 216–218, isoleucine 254, and 261–265 each bind ATP; these read GED and KMSKS. The 'KMSKS' region motif lies at 261–265; it reads KMSKS.

The protein belongs to the class-I aminoacyl-tRNA synthetase family. Homodimer.

The protein resides in the cytoplasm. The enzyme catalyses tRNA(Trp) + L-tryptophan + ATP = L-tryptophyl-tRNA(Trp) + AMP + diphosphate + H(+). Catalyzes the attachment of tryptophan to tRNA(Trp). The sequence is that of Tryptophan--tRNA ligase from Aquifex aeolicus (strain VF5).